A 2159-amino-acid chain; its full sequence is ATP-binding cassette sub-family A member 7 (2159 aa).

A helical membrane pass occupies residues Pro22–Val42. The Extracellular segment spans residues Arg43–Ser546. A disulfide bridge links Cys75 with Cys222. An N-linked (GlcNAc...) asparagine glycan is attached at Asn309. Transmembrane regions (helical) follow at residues Leu547 to Val567, Leu590 to Val610, Val623 to Leu643, Leu652 to Val672, Leu678 to Cys698, and Ala732 to Cys752. The ABC transporter 1 domain occupies Val804–Val1035. Gly838 to Thr845 contacts ATP. A helical membrane pass occupies residues Thr846–Gly866. Disordered stretches follow at residues Val1042 to Pro1088 and Gly1172 to Pro1192. The span at His1044 to Gly1061 shows a compositional bias: basic and acidic residues. A compositionally biased stretch (polar residues) spans Asn1062–Ala1081. Residues Val1246–Phe1266 traverse the membrane as a helical segment. At Gly1267–Leu1551 the chain is on the extracellular side. Cysteines 1359 and 1373 form a disulfide. A run of 5 helical transmembrane segments spans residues Val1552–Ile1572, Phe1598–Ala1618, Leu1635–Phe1655, Val1663–Leu1683, and Ile1743–Leu1763. In terms of domain architecture, ABC transporter 2 spans Leu1807–Arg2039. Residue Gly1841 to Thr1848 coordinates ATP. The tract at residues Gln2118 to Ile2159 is disordered. The segment covering Gly2119–Glu2133 has biased composition (acidic residues).

Belongs to the ABC transporter superfamily. ABCA family. In terms of processing, N-glycosylated. Widely expressed with higher expression in brain, lung, adrenal gland, spleen and hematopoietic tissues (at protein level). In the brain, expressed in cortex, cerebellum, hippocampus, olfactory bulb, neurons, astrocytes and microglia (at protein level). Also expressed in adipocytes and macrophages (at protein level). Expressed in thymocytes (at protein level). Highly expressed in spleen and hematopoietic tissues. Expressed in brain, lung, macrophages, microglia, oligodendrocytes and neurons.

It is found in the cell membrane. Its subcellular location is the golgi apparatus membrane. It localises to the early endosome membrane. The protein resides in the cytoplasm. The protein localises to the cell projection. It is found in the ruffle membrane. Its subcellular location is the phagocytic cup. Functionally, probable ATP-binding cassette (ABC) transporter that plays a role in lipid homeostasis and macrophage-mediated phagocytosis. Binds APOA1 and may function in apolipoprotein-mediated phospholipid efflux from cells. May also mediate cholesterol efflux. May regulate cellular ceramide homeostasis during keratinocyte differentiation. Involved in lipid raft organization and CD1D localization on thymocytes and antigen-presenting cells, which plays an important role in natural killer T-cell development and activation. Plays a role in phagocytosis of apoptotic cells by macrophages. Macrophage phagocytosis is stimulated by APOA1 or APOA2, probably by stabilization of ABCA7. Also involved in phagocytic clearance of amyloid-beta by microglia cells and macrophages. Further limits amyloid-beta production by playing a role in the regulation of amyloid-beta A4 precursor protein (APP) endocytosis and/or processing. The chain is ATP-binding cassette sub-family A member 7 (Abca7) from Mus musculus (Mouse).